Consider the following 120-residue polypeptide: Putative ferric transport system permease-like protein AfuB (120 aa).

Over 1–38 (MESLPGQIDKSLDEASLSLRAGSLRTITHILLPLLRPA) the chain is Cytoplasmic. Positions 1-102 (MESLPGQIDK…VVMLAIIFIF (102 aa)) constitute an ABC transmembrane type-1 domain. A helical membrane pass occupies residues 39-59 (ILSALIYSFVRAITTVSAIVF). Residues 60–81 (LVTPDTRVATAYILNRVEDGEY) lie on the Periplasmic side of the membrane. The helical transmembrane segment at 82-102 (GVAIAYGSILIVVMLAIIFIF) threads the bilayer. Residues 103-120 (DWLIGESRTSRSKAKNQA) are Cytoplasmic-facing.

The protein belongs to the binding-protein-dependent transport system permease family. FbpB subfamily.

It localises to the cell inner membrane. In terms of biological role, a severely truncated paralog of the AfuB uptake protein, homologous only to the last 20% of the intact protein in Actinobacillus. This chain is Putative ferric transport system permease-like protein AfuB (afuB), found in Escherichia coli (strain K12).